The chain runs to 600 residues: Proline--tRNA ligase (600 aa).

This sequence belongs to the class-II aminoacyl-tRNA synthetase family. ProS type 1 subfamily. In terms of assembly, homodimer.

It is found in the cytoplasm. The catalysed reaction is tRNA(Pro) + L-proline + ATP = L-prolyl-tRNA(Pro) + AMP + diphosphate. Its function is as follows. Catalyzes the attachment of proline to tRNA(Pro) in a two-step reaction: proline is first activated by ATP to form Pro-AMP and then transferred to the acceptor end of tRNA(Pro). As ProRS can inadvertently accommodate and process non-cognate amino acids such as alanine and cysteine, to avoid such errors it has two additional distinct editing activities against alanine. One activity is designated as 'pretransfer' editing and involves the tRNA(Pro)-independent hydrolysis of activated Ala-AMP. The other activity is designated 'posttransfer' editing and involves deacylation of mischarged Ala-tRNA(Pro). The misacylated Cys-tRNA(Pro) is not edited by ProRS. In Prochlorococcus marinus (strain MIT 9301), this protein is Proline--tRNA ligase.